A 129-amino-acid chain; its full sequence is Large ribosomal subunit protein bL20 (129 aa).

It belongs to the bacterial ribosomal protein bL20 family.

In terms of biological role, binds directly to 23S ribosomal RNA and is necessary for the in vitro assembly process of the 50S ribosomal subunit. It is not involved in the protein synthesizing functions of that subunit. The chain is Large ribosomal subunit protein bL20 from Mycobacterium sp. (strain JLS).